The chain runs to 501 residues: Serine/threonine protein phosphatase 2A 55 kDa regulatory subunit B beta isoform (501 aa).

Methionine 1 carries the post-translational modification N-acetylmethionine. WD repeat units follow at residues 34–73 (QEVD…DHGG), 110–151 (EIEE…IKKI), 220–258 (AHDY…QSFN), 269–309 (DLTE…LCDS), and 328–366 (EIIA…GPVA). Residues 439-449 (TPARPSRSIGS) show a composition bias toward polar residues. The tract at residues 439 to 466 (TPARPSRSIGSMTRVVRRGSESPGTEAN) is disordered. One copy of the WD 6 repeat lies at 471-501 (DFTTKLLHMAWHPTENSIACAAANSLYMYYA).

The protein belongs to the phosphatase 2A regulatory subunit B family. PP2A consists of a common heteromeric enzyme, composed of a catalytic subunit (subunits C), a constant regulatory subunit (subunit A), and a variety of regulatory subunits such as subunits B (the R2/B/PR55/B55, R3/B''/PR72/PR130/PR59 and R5/B'/B56 families). Interacts with SIC/RON3. In terms of tissue distribution, expressed ubiquitously.

Its function is as follows. The B regulatory subunit may modulate substrate selectivity and catalytic activity, and may also direct the localization of the catalytic enzyme to a particular subcellular compartment. This Arabidopsis thaliana (Mouse-ear cress) protein is Serine/threonine protein phosphatase 2A 55 kDa regulatory subunit B beta isoform (PP2AB2).